A 358-amino-acid polypeptide reads, in one-letter code: Peptide chain release factor 1 (358 aa).

Q233 bears the N5-methylglutamine mark.

This sequence belongs to the prokaryotic/mitochondrial release factor family. In terms of processing, methylated by PrmC. Methylation increases the termination efficiency of RF1.

It localises to the cytoplasm. Peptide chain release factor 1 directs the termination of translation in response to the peptide chain termination codons UAG and UAA. This chain is Peptide chain release factor 1, found in Flavobacterium johnsoniae (strain ATCC 17061 / DSM 2064 / JCM 8514 / BCRC 14874 / CCUG 350202 / NBRC 14942 / NCIMB 11054 / UW101) (Cytophaga johnsonae).